A 644-amino-acid chain; its full sequence is MFQDNPLLAQLKQQLHSQTPRAEGVVKATEKGFGFLEVDAQKSYFIPPPQMKKVMHGDRIIAVIHSEKERESAEPEELVEPFLTRFVGKVQGKNDRLAIVPDHPLLKDAIPCRAARGLNHEFKEGDWAVAEMRRHPLKGDRSFYAELTQYITFGDDHFVPWWVTLARHNLEKEAPDGVATEMLDEGLVREDLTALDFVTIDSASTEDMDDALFAKALPDGKLQLIVAIADPTAWIAEGSKLDKAAKIRAFTNYLPGFNIPMLPRELSDDLCSLRANEVRPVLACRMTLSTDGTIEDNIEFFAATIESKAKLVYDQVSDWLENTGDWQPESEAIAEQVRLLAQICQRRGEWRHNHALVFKDRPDYRFILGEKGEVLDIVAEPRRIANRIVEEAMIAANICAARVLRDKLGFGIYNVHMGFDPANADALAALLKTHGLHVDAEEVLTLDGFCKLRRELDAQPTGFLDSRIRRFQSFAEISTEPGPHFGLGLEAYATWTSPIRKYGDMINHRLLKAVIKGETATRPQDEITVQMAERRRLNRMAERDVGDWLYARFLKDKAGTDTRFAAEIVDISRGGMRVRLVDNGAIAFIPAPFLHAVRDELVCSQENGTVQIKGETAYKVTDVIDVTIAEVRMETRSIIARPVA.

One can recognise an RNB domain in the interval 189 to 516 (REDLTALDFV…NHRLLKAVIK (328 aa)). The S1 motif domain maps to 561-643 (DTRFAAEIVD…ETRSIIARPV (83 aa)).

This sequence belongs to the RNR ribonuclease family. RNase II subfamily.

It localises to the cytoplasm. It carries out the reaction Exonucleolytic cleavage in the 3'- to 5'-direction to yield nucleoside 5'-phosphates.. Involved in mRNA degradation. Hydrolyzes single-stranded polyribonucleotides processively in the 3' to 5' direction. This is Exoribonuclease 2 from Escherichia coli O6:K15:H31 (strain 536 / UPEC).